Reading from the N-terminus, the 299-residue chain is ATP synthase gamma chain (299 aa).

The protein belongs to the ATPase gamma chain family. In terms of assembly, F-type ATPases have 2 components, CF(1) - the catalytic core - and CF(0) - the membrane proton channel. CF(1) has five subunits: alpha(3), beta(3), gamma(1), delta(1), epsilon(1). CF(0) has three main subunits: a, b and c.

It is found in the cell inner membrane. Its function is as follows. Produces ATP from ADP in the presence of a proton gradient across the membrane. The gamma chain is believed to be important in regulating ATPase activity and the flow of protons through the CF(0) complex. In Rhodospirillum rubrum, this protein is ATP synthase gamma chain.